The primary structure comprises 1061 residues: Ribonuclease E (1061 aa).

An S1 motif domain is found at 39 to 119 (ANIYKGKITR…GNKGAALTTF (81 aa)). Residues 57 to 112 (FVDYGAERHGFLPLKEIAREYFPANYSAHGRPNIKDVLREGQEVIVQIDKEERGNK) are interaction with RNA. The tract at residues 169 to 170 (RT) is interaction with RNA 5'-terminal monophosphate. Positions 303 and 346 each coordinate Mg(2+). Residues Cys-404 and Cys-407 each coordinate Zn(2+). The required for zinc-mediated homotetramerization and catalytic activity stretch occupies residues 404-407 (CPRC). Disordered regions lie at residues 532-565 (FAMPDVPPAPTPAEPAAPVVAPAPKAAPATPAAP), 586-731 (EETK…KVRY), and 752-822 (EPIV…RYPT). Over residues 536 to 546 (DVPPAPTPAEP) the composition is skewed to pro residues. The span at 547–565 (AAPVVAPAPKAAPATPAAP) shows a compositional bias: low complexity. Composition is skewed to basic and acidic residues over residues 598-608 (AEAKPERQQDR), 615-640 (NRRDRNERRDTRSERTEGSDNREENR), and 652-690 (ETRESRQQAEVTEKARTADEQQAPRRERSRRRNDDKRQA). Positions 796-814 (RRSRRSPRHLRVSGQRRRR) are enriched in basic residues. Residues 833–850 (ASPELASGKVWIRYPIVR) are interaction with enolase. The interval 1021–1061 (EAPRHSDWQRPTFAFEGKGAAGGHTATHHASAAPARPQPVE) is interaction with PNPase. The interval 1031–1061 (PTFAFEGKGAAGGHTATHHASAAPARPQPVE) is disordered. Positions 1043–1055 (GHTATHHASAAPA) are enriched in low complexity.

The protein belongs to the RNase E/G family. RNase E subfamily. In terms of assembly, component of the RNA degradosome, which is a multiprotein complex involved in RNA processing and mRNA degradation. Within the RNA degradosome, RNase E assembles into a homotetramer formed by a dimer of dimers. Tetramerization is essential for catalytic activity, but not for RNA-binding. Interacts with RhlB, PNPase (pnp) and enolase (eno). Interacts with DeaD at reduced temperature. The cofactor is Zn(2+). Mg(2+) serves as cofactor.

The protein localises to the cytoplasm. The protein resides in the cell inner membrane. The enzyme catalyses Endonucleolytic cleavage of single-stranded RNA in A- and U-rich regions.. With respect to regulation, the presence of a 5'-monophosphate on substrate RNA accelerates its cleavage by catalytically activating the enzyme. Binding to the membrane stabilizes protein structure and increases affinity for the substrate. Functionally, endoribonuclease that plays a central role in RNA processing and decay. Required for the maturation of 5S and 16S rRNAs and the majority of tRNAs. Also involved in the degradation of most mRNAs. Can also process other RNA species, such as RNAI, a molecule that controls the replication of ColE1 plasmid, and the cell division inhibitor DicF-RNA. It initiates the decay of RNAs by cutting them internally near their 5'-end. It is able to remove poly(A) tails by an endonucleolytic process. Required to initiate rRNA degradation during both starvation and quality control; acts after RNase PH (rph) exonucleolytically digests the 3'-end of the 16S rRNA. Degradation of 16S rRNA leads to 23S rRNA degradation. Processes the 3 tRNA(Pro) precursors immediately after the 3'-CCA to generate the mature ends. Its function is as follows. Prefers 5'-monophosphorylated substrates over 5'-triphosphorylated substrates. 5'-monophosphate-assisted cleavage requires at least 2 and preferably 3 or more unpaired 5'-terminal nucleotides. The optimal spacing between the 5' end and the scissile phosphate appears to be 8 nucleotides. Any sequence of unpaired nucleotides at the 5'-end is tolerated. The sequence is that of Ribonuclease E from Escherichia coli (strain K12).